Reading from the N-terminus, the 105-residue chain is Met repressor (105 aa).

Belongs to the MetJ family. Homodimer.

The protein localises to the cytoplasm. Functionally, this regulatory protein, when combined with SAM (S-adenosylmethionine) represses the expression of the methionine regulon and of enzymes involved in SAM synthesis. This chain is Met repressor, found in Proteus mirabilis (strain HI4320).